Reading from the N-terminus, the 325-residue chain is MAAAAASLRGVVLGPRGAGLPGARARGLLCSARPGQLPLRTPQAVALSSKSGLSRGRKVMLSALGMLAAGGAGLAMALHSAVSASDLELHPPSYPWSHRGLLSSLDHTSIRRGFQVYKQVCASCHSMDFVAYRHLVGVCYTEDEAKELAAEVEVQDGPNEDGEMFMRPGKLFDYFPKPYPNSEAARAANNGALPPDLSYIVRARHGGEDYVFSLLTGYCEPPTGVSLREGLYFNPYFPGQAIAMAPPIYTDVLEFDDGTPATMSQIAKDVCTFLRWASEPEHDHRKRMGLKMLMMMALLVPLVYTIKRHKWSVLKSRKLAYRPPK.

A mitochondrion-targeting transit peptide spans 1-84 (MAAAAASLRG…AMALHSAVSA (84 aa)). The Mitochondrial intermembrane segment spans residues 85–281 (SDLELHPPSY…TFLRWASEPE (197 aa)). The region spanning 108-209 (TSIRRGFQVY…IVRARHGGED (102 aa)) is the Cytochrome c domain. Heme c contacts are provided by Cys-121, Cys-124, and His-125. Ser-182 is subject to Phosphoserine. A heme c-binding site is contributed by Met-244. Residues 282 to 315 (HDHRKRMGLKMLMMMALLVPLVYTIKRHKWSVLK) form a helical membrane-spanning segment. Topologically, residues 316-325 (SRKLAYRPPK) are mitochondrial matrix.

The protein belongs to the cytochrome c family. Component of the ubiquinol-cytochrome c oxidoreductase (cytochrome b-c1 complex, complex III, CIII), a multisubunit enzyme composed of 11 subunits. The complex is composed of 3 respiratory subunits cytochrome b, cytochrome c1 and Rieske protein UQCRFS1, 2 core protein subunits UQCRC1/QCR1 and UQCRC2/QCR2, and 6 low-molecular weight protein subunits UQCRH/QCR6, UQCRB/QCR7, UQCRQ/QCR8, UQCR10/QCR9, UQCR11/QCR10 and subunit 9, the cleavage product of Rieske protein UQCRFS1. The complex exists as an obligatory dimer and forms supercomplexes (SCs) in the inner mitochondrial membrane with NADH-ubiquinone oxidoreductase (complex I, CI) and cytochrome c oxidase (complex IV, CIV), resulting in different assemblies (supercomplex SCI(1)III(2)IV(1) and megacomplex MCI(2)III(2)IV(2)). Interacts with FLVCR2; this interaction occurs in the absence of heme and is disrupted upon heme binding. Heme c is required as a cofactor.

It is found in the mitochondrion inner membrane. It catalyses the reaction a quinol + 2 Fe(III)-[cytochrome c](out) = a quinone + 2 Fe(II)-[cytochrome c](out) + 2 H(+)(out). Its function is as follows. Component of the ubiquinol-cytochrome c oxidoreductase, a multisubunit transmembrane complex that is part of the mitochondrial electron transport chain which drives oxidative phosphorylation. The respiratory chain contains 3 multisubunit complexes succinate dehydrogenase (complex II, CII), ubiquinol-cytochrome c oxidoreductase (cytochrome b-c1 complex, complex III, CIII) and cytochrome c oxidase (complex IV, CIV), that cooperate to transfer electrons derived from NADH and succinate to molecular oxygen, creating an electrochemical gradient over the inner membrane that drives transmembrane transport and the ATP synthase. The cytochrome b-c1 complex catalyzes electron transfer from ubiquinol to cytochrome c, linking this redox reaction to translocation of protons across the mitochondrial inner membrane, with protons being carried across the membrane as hydrogens on the quinol. In the process called Q cycle, 2 protons are consumed from the matrix, 4 protons are released into the intermembrane space and 2 electrons are passed to cytochrome c. Cytochrome c1 is a catalytic core subunit containing a c-type heme. It transfers electrons from the [2Fe-2S] iron-sulfur cluster of the Rieske protein to cytochrome c. The chain is Cytochrome c1, heme protein, mitochondrial (CYC1) from Homo sapiens (Human).